The sequence spans 36 residues: Photosystem I reaction center subunit VIII (36 aa).

A helical transmembrane segment spans residues 6-28; it reads LPSIFVPLIGLFFPAIAMASLFL.

It belongs to the PsaI family.

The protein resides in the plastid. It is found in the chloroplast thylakoid membrane. Functionally, may help in the organization of the PsaL subunit. This is Photosystem I reaction center subunit VIII from Amborella trichopoda.